A 498-amino-acid chain; its full sequence is Bifunctional protein GlmU (498 aa).

The tract at residues 1–238 (MSDAAVVILA…PALVAGVNDR (238 aa)) is pyrophosphorylase. UDP-N-acetyl-alpha-D-glucosamine contacts are provided by residues 9 to 12 (LAAG), Lys23, Gln80, and 85 to 86 (GT). Residue Asp111 coordinates Mg(2+). 4 residues coordinate UDP-N-acetyl-alpha-D-glucosamine: Gly148, Glu163, Asn178, and Asn236. Asn236 lines the Mg(2+) pocket. Positions 239–259 (VQLADLGAELNRRVVAAHQRA) are linker. The interval 260-498 (GVTIVDPATT…TAKPAPATGE (239 aa)) is N-acetyltransferase. Residues Arg341 and Lys359 each coordinate UDP-N-acetyl-alpha-D-glucosamine. The active-site Proton acceptor is the His371. The UDP-N-acetyl-alpha-D-glucosamine site is built by Tyr374 and Asn385. Acetyl-CoA-binding positions include Ala388, 394-395 (NY), Ser413, and Ala431. The disordered stretch occupies residues 470 to 498 (AAEAAAADGDTAAADRAAATAKPAPATGE).

This sequence in the N-terminal section; belongs to the N-acetylglucosamine-1-phosphate uridyltransferase family. The protein in the C-terminal section; belongs to the transferase hexapeptide repeat family. As to quaternary structure, homotrimer. Requires Mg(2+) as cofactor.

The protein resides in the cytoplasm. It catalyses the reaction alpha-D-glucosamine 1-phosphate + acetyl-CoA = N-acetyl-alpha-D-glucosamine 1-phosphate + CoA + H(+). The catalysed reaction is N-acetyl-alpha-D-glucosamine 1-phosphate + UTP + H(+) = UDP-N-acetyl-alpha-D-glucosamine + diphosphate. Its pathway is nucleotide-sugar biosynthesis; UDP-N-acetyl-alpha-D-glucosamine biosynthesis; N-acetyl-alpha-D-glucosamine 1-phosphate from alpha-D-glucosamine 6-phosphate (route II): step 2/2. It functions in the pathway nucleotide-sugar biosynthesis; UDP-N-acetyl-alpha-D-glucosamine biosynthesis; UDP-N-acetyl-alpha-D-glucosamine from N-acetyl-alpha-D-glucosamine 1-phosphate: step 1/1. The protein operates within bacterial outer membrane biogenesis; LPS lipid A biosynthesis. In terms of biological role, catalyzes the last two sequential reactions in the de novo biosynthetic pathway for UDP-N-acetylglucosamine (UDP-GlcNAc). The C-terminal domain catalyzes the transfer of acetyl group from acetyl coenzyme A to glucosamine-1-phosphate (GlcN-1-P) to produce N-acetylglucosamine-1-phosphate (GlcNAc-1-P), which is converted into UDP-GlcNAc by the transfer of uridine 5-monophosphate (from uridine 5-triphosphate), a reaction catalyzed by the N-terminal domain. The polypeptide is Bifunctional protein GlmU (Mycolicibacterium gilvum (strain PYR-GCK) (Mycobacterium gilvum (strain PYR-GCK))).